We begin with the raw amino-acid sequence, 312 residues long: Protein phosphatase 2A catalytic subunit B (312 aa).

Mn(2+)-binding residues include D55, H57, D83, and N115. H116 acts as the Proton donor in catalysis. Mn(2+)-binding residues include H165 and H240.

This sequence belongs to the PPP phosphatase family. PP-2A subfamily. Component of the Sca1 complex composed of at least gefA, gefH, scaA, phr, and the protein phosphatase 2A subunits pppA and pho2B. Mn(2+) serves as cofactor.

Its subcellular location is the cell membrane. The catalysed reaction is O-phospho-L-seryl-[protein] + H2O = L-seryl-[protein] + phosphate. The enzyme catalyses O-phospho-L-threonyl-[protein] + H2O = L-threonyl-[protein] + phosphate. Its function is as follows. Component of the Sca1 complex, a regulator of cell motility, chemotaxis and signal relay. The Sca1 complex is recruited to the plasma membrane in a chemoattractant- and F-actin-dependent manner and is enriched at the leading edge of chemotaxing cells where it regulates F-actin dynamics and signal relay by controlling the activation of rasC and the downstream target of rapamycin complex 2 (TORC2)-Akt/protein kinase B (PKB) pathway. This is Protein phosphatase 2A catalytic subunit B from Dictyostelium discoideum (Social amoeba).